The following is a 468-amino-acid chain: Cyclin-dependent kinase 14 (468 aa).

Ser-24, Ser-77, and Ser-94 each carry phosphoserine. A disordered region spans residues 103 to 132 (KTSSAGKESPKVRRHSSPSSPTSPKFGKAD). Phosphoserine is present on Ser-133. The region spanning 134-418 (YEKLEKLGEG…AQAALSHEYF (285 aa)) is the Protein kinase domain. Residues 140–148 (LGEGSYATV) and Lys-163 contribute to the ATP site. Residue Asp-255 is the Proton acceptor of the active site. Residues 448–468 (ESMRAFGKNNSYGKSLSNSKH) are disordered. The segment covering 455–468 (KNNSYGKSLSNSKH) has biased composition (polar residues).

It belongs to the protein kinase superfamily. CMGC Ser/Thr protein kinase family. CDC2/CDKX subfamily. In terms of assembly, found in a complex with LRP6, CCNY and CAPRIN2 during G2/M stage; CAPRIN2 functions as a scaffold for the complex by binding to CCNY via its N terminus and to CDK14 via its C terminus. Interacts with CCNY; CCNY mediates its recruitment to the plasma membrane and promotes phosphorylation of LRP6. Interacts with CCDN3 and CDKN1A. Interacts with SEPT8. Interacts with 14-3-3 proteina YWHAB, YWHAE, YWHAH and YWHAQ.

The protein localises to the cell membrane. Its subcellular location is the cytoplasm. It is found in the nucleus. It carries out the reaction L-seryl-[protein] + ATP = O-phospho-L-seryl-[protein] + ADP + H(+). The enzyme catalyses L-threonyl-[protein] + ATP = O-phospho-L-threonyl-[protein] + ADP + H(+). Serine/threonine-protein kinase activity is promoted by associated cyclins CCDN3 and CCNY and repressed by CDKN1A. In terms of biological role, serine/threonine-protein kinase involved in the control of the eukaryotic cell cycle, whose activity is controlled by an associated cyclin. Acts as a cell-cycle regulator of Wnt signaling pathway during G2/M phase by mediating the phosphorylation of LRP6 at 'Ser-1490', leading to the activation of the Wnt signaling pathway. Acts as a regulator of cell cycle progression and cell proliferation via its interaction with CCDN3. Phosphorylates RB1 in vitro, however the relevance of such result remains to be confirmed in vivo. May also play a role in meiosis, neuron differentiation and may indirectly act as a negative regulator of insulin-responsive glucose transport. This Dasypus novemcinctus (Nine-banded armadillo) protein is Cyclin-dependent kinase 14 (CDK14).